Consider the following 385-residue polypeptide: Dual-specificity RNA methyltransferase RlmN (385 aa).

Catalysis depends on Glu-113, which acts as the Proton acceptor. Residues 120 to 352 (VGRAGALCVS…NRAGYASPIR (233 aa)) form the Radical SAM core domain. A disulfide bond links Cys-127 and Cys-363. 3 residues coordinate [4Fe-4S] cluster: Cys-134, Cys-138, and Cys-141. Residues 189 to 190 (GE), Ser-221, 243 to 245 (SLH), and Asn-320 each bind S-adenosyl-L-methionine. The S-methylcysteine intermediate role is filled by Cys-363.

Belongs to the radical SAM superfamily. RlmN family. [4Fe-4S] cluster serves as cofactor.

Its subcellular location is the cytoplasm. It catalyses the reaction adenosine(2503) in 23S rRNA + 2 reduced [2Fe-2S]-[ferredoxin] + 2 S-adenosyl-L-methionine = 2-methyladenosine(2503) in 23S rRNA + 5'-deoxyadenosine + L-methionine + 2 oxidized [2Fe-2S]-[ferredoxin] + S-adenosyl-L-homocysteine. The enzyme catalyses adenosine(37) in tRNA + 2 reduced [2Fe-2S]-[ferredoxin] + 2 S-adenosyl-L-methionine = 2-methyladenosine(37) in tRNA + 5'-deoxyadenosine + L-methionine + 2 oxidized [2Fe-2S]-[ferredoxin] + S-adenosyl-L-homocysteine. Specifically methylates position 2 of adenine 2503 in 23S rRNA and position 2 of adenine 37 in tRNAs. m2A2503 modification seems to play a crucial role in the proofreading step occurring at the peptidyl transferase center and thus would serve to optimize ribosomal fidelity. The sequence is that of Dual-specificity RNA methyltransferase RlmN from Phenylobacterium zucineum (strain HLK1).